The following is a 510-amino-acid chain: NAD(P)H-quinone oxidoreductase subunit 2 B, chloroplastic (510 aa).

13 helical membrane passes run 24–44 (LLLF…GLIL), 57–77 (IPWL…ALLF), 99–119 (IFQF…VEYI), 124–144 (MAIT…MFLC), 149–169 (LITI…LSGY), 183–203 (YLLM…WLYG), 227–247 (PGIS…LSPA), 295–315 (WHLL…LIAI), 323–343 (MLAY…IVGD), 347–367 (GYAS…GTFA), 395–415 (ALSL…AGFF), 418–438 (LHLF…IGLL), and 482–502 (LSMI…NPII).

This sequence belongs to the complex I subunit 2 family. In terms of assembly, NDH is composed of at least 16 different subunits, 5 of which are encoded in the nucleus.

Its subcellular location is the plastid. The protein resides in the chloroplast thylakoid membrane. It carries out the reaction a plastoquinone + NADH + (n+1) H(+)(in) = a plastoquinol + NAD(+) + n H(+)(out). It catalyses the reaction a plastoquinone + NADPH + (n+1) H(+)(in) = a plastoquinol + NADP(+) + n H(+)(out). Functionally, NDH shuttles electrons from NAD(P)H:plastoquinone, via FMN and iron-sulfur (Fe-S) centers, to quinones in the photosynthetic chain and possibly in a chloroplast respiratory chain. The immediate electron acceptor for the enzyme in this species is believed to be plastoquinone. Couples the redox reaction to proton translocation, and thus conserves the redox energy in a proton gradient. This chain is NAD(P)H-quinone oxidoreductase subunit 2 B, chloroplastic, found in Cucumis sativus (Cucumber).